The following is a 265-amino-acid chain: Uronate dehydrogenase (265 aa).

NAD(+)-binding positions include 12–13 (QL), 32–34 (DLS), 49–50 (DL), and 69–73 (LGGIS). Substrate contacts are provided by residues S73 and 109–111 (SNH). Catalysis depends on Y134, which acts as the Proton acceptor. Residue K138 coordinates NAD(+). Residue S163 coordinates substrate. NAD(+) is bound at residue C164. R172 serves as a coordination point for substrate.

This sequence belongs to the NAD(P)-dependent epimerase/dehydratase family. As to quaternary structure, homohexamer.

The enzyme catalyses beta-D-galacturonate + NAD(+) = D-galactaro-1,5-lactone + NADH + H(+). The catalysed reaction is beta-D-glucuronate + NAD(+) = D-glucaro-1,5-lactone + NADH + H(+). Its pathway is carbohydrate acid metabolism; D-galacturonate degradation via prokaryotic oxidative pathway. Its function is as follows. Catalyzes the oxidation of D-galacturonate and D-glucuronate to galactarate and D-glucarate, respectively. In fact, in water solution the substrate D-galacturonate is predominantly in pyranosic form whose beta anomer is converted by the enzyme to D-galactaro-1,5-lactone; in solution, this reaction product rearranges to the more stable D-galactaro-1,4-lactone. Makes part of the oxidative degradation pathway of D-galacturonate, which allows A.tumefaciens to utilize D-galacturonate as a sole carbon source. Cannot use NADP(+) instead of NAD(+) as cosubstrate. Is not active on D-galactose, D-glucose, D-galactonate and D-gluconate. This is Uronate dehydrogenase (udh) from Agrobacterium fabrum (strain C58 / ATCC 33970) (Agrobacterium tumefaciens (strain C58)).